The chain runs to 39 residues: Cytochrome b559 subunit beta (39 aa).

The helical transmembrane segment at 14 to 30 (WLAIHGLAVPTVFFLGS) threads the bilayer. H18 is a heme binding site.

In terms of assembly, heterodimer of an alpha subunit and a beta subunit. PSII is composed of 1 copy each of membrane proteins PsbA, PsbB, PsbC, PsbD, PsbE, PsbF, PsbH, PsbI, PsbJ, PsbK, PsbL, PsbM, PsbT, PsbX, PsbY, PsbZ, Psb30/Ycf12, at least 3 peripheral proteins of the oxygen-evolving complex and a large number of cofactors. It forms dimeric complexes. Heme b is required as a cofactor. Post-translationally, the N-terminus is blocked.

The protein localises to the plastid. It localises to the chloroplast thylakoid membrane. In terms of biological role, this b-type cytochrome is tightly associated with the reaction center of photosystem II (PSII). PSII is a light-driven water:plastoquinone oxidoreductase that uses light energy to abstract electrons from H(2)O, generating O(2) and a proton gradient subsequently used for ATP formation. It consists of a core antenna complex that captures photons, and an electron transfer chain that converts photonic excitation into a charge separation. This is Cytochrome b559 subunit beta from Spinacia oleracea (Spinach).